Reading from the N-terminus, the 407-residue chain is Inhibin beta B chain (407 aa).

The N-terminal stretch at 1 to 28 (MDGLPGRALGAACLLLLAAGWLGPEAWG) is a signal peptide. The tract at residues 26 to 62 (AWGSPTPPPTPAAPPPPPPPGSPGGSQDTCTSCGGFR) is disordered. Positions 29–292 (SPTPPPTPAA…GDSRHRIRKR (264 aa)) are excised as a propeptide. Residues 30–47 (PTPPPTPAAPPPPPPPGS) show a composition bias toward pro residues. A glycan (N-linked (GlcNAc...) asparagine) is linked at asparagine 93. 4 disulfides stabilise this stretch: cysteine 296/cysteine 304, cysteine 303/cysteine 372, cysteine 332/cysteine 404, and cysteine 336/cysteine 406.

It belongs to the TGF-beta family. Dimeric, linked by one or more disulfide bonds. Inhibin B is a dimer of alpha and beta-B. Activin B is a homodimer of beta-B. Activin AB is a dimer of beta-A and beta-B. Interacts with FST and FSTL3. Activin B interacts with BMPR2.

Its subcellular location is the secreted. Inhibins and activins inhibit and activate, respectively, the secretion of follitropin by the pituitary gland. Inhibins/activins are involved in regulating a number of diverse functions such as hypothalamic and pituitary hormone secretion, gonadal hormone secretion, germ cell development and maturation, erythroid differentiation, insulin secretion, nerve cell survival, embryonic axial development or bone growth, depending on their subunit composition. Inhibins appear to oppose the functions of activins. In terms of biological role, activin B is a dimer of alpha and beta-B that plays a role in several essential biological processes including embryonic development, stem cell maintenance and differentiation, haematopoiesis, cell proliferation and wound healing. Signals through type I receptor ACVR1C, abundantly expressed in pancreatic beta cells, and type II receptors like ACVR2A or BMPR2. Upon ligand binding, these receptors phosphorylate intracellular signaling mediators SMAD2 and SMAD3, which form a complex with SMAD4, translocate to the nucleus, and regulate gene expression. Plays a crucial role in the induction of hepcidin by inflammation through activation of ACVR1C and subsequent phosphorylation of SMAD1/5/8. Regulates adipocyte lipid metabolism by decreasing non-esterified fatty acids and glycerol release and increases intracellular triglyceride content. Stimulates wound healing by promoting cell migration and hair follicle regeneration through the JNK and ERK signaling pathways downstream of RHOA. Functionally, inhibin B is a dimer of alpha and beta-B that plays a crucial role in the regulation of the reproductive system by inhibiting the secretion of follicle-stimulating hormone (FSH) from the anterior pituitary gland. Thereby, maintains reproductive homeostasis in both males and females. Acts as a more potent suppressor of FSH release than inhibin A. Functions as competitive receptor antagonist binding activin type II receptors with high affinity in the presence of the TGF-beta type III coreceptor/TGFBR3L. This chain is Inhibin beta B chain (INHBB), found in Homo sapiens (Human).